Reading from the N-terminus, the 228-residue chain is uncharacterized protein (228 aa).

This is an uncharacterized protein from Rickettsia prowazekii (strain Madrid E).